The primary structure comprises 261 residues: Carnitinyl-CoA dehydratase (261 aa).

The Nucleophile role is filled by E111. E131 acts as the Proton acceptor in catalysis.

Belongs to the enoyl-CoA hydratase/isomerase family.

The catalysed reaction is (R)-carnitinyl-CoA = crotonobetainyl-CoA + H2O. It functions in the pathway amine and polyamine metabolism; carnitine metabolism. Functionally, catalyzes the reversible dehydration of L-carnitinyl-CoA to crotonobetainyl-CoA. The sequence is that of Carnitinyl-CoA dehydratase from Proteus mirabilis (strain HI4320).